We begin with the raw amino-acid sequence, 450 residues long: Phosphoglucosamine mutase (450 aa).

Ser-102 serves as the catalytic Phosphoserine intermediate. Residues Ser-102, Asp-243, Asp-245, and Asp-247 each coordinate Mg(2+). Residue Ser-102 is modified to Phosphoserine.

Belongs to the phosphohexose mutase family. The cofactor is Mg(2+). In terms of processing, activated by phosphorylation.

It carries out the reaction alpha-D-glucosamine 1-phosphate = D-glucosamine 6-phosphate. Its function is as follows. Catalyzes the conversion of glucosamine-6-phosphate to glucosamine-1-phosphate. The sequence is that of Phosphoglucosamine mutase from Mesorhizobium japonicum (strain LMG 29417 / CECT 9101 / MAFF 303099) (Mesorhizobium loti (strain MAFF 303099)).